The primary structure comprises 288 residues: Ribosomal RNA small subunit methyltransferase A (288 aa).

S-adenosyl-L-methionine contacts are provided by Asn28, Leu30, Gly55, Glu77, Asp103, and Asn123.

The protein belongs to the class I-like SAM-binding methyltransferase superfamily. rRNA adenine N(6)-methyltransferase family. RsmA subfamily.

The protein localises to the cytoplasm. It catalyses the reaction adenosine(1518)/adenosine(1519) in 16S rRNA + 4 S-adenosyl-L-methionine = N(6)-dimethyladenosine(1518)/N(6)-dimethyladenosine(1519) in 16S rRNA + 4 S-adenosyl-L-homocysteine + 4 H(+). Its function is as follows. Specifically dimethylates two adjacent adenosines (A1518 and A1519) in the loop of a conserved hairpin near the 3'-end of 16S rRNA in the 30S particle. May play a critical role in biogenesis of 30S subunits. The sequence is that of Ribosomal RNA small subunit methyltransferase A from Xanthobacter autotrophicus (strain ATCC BAA-1158 / Py2).